A 404-amino-acid polypeptide reads, in one-letter code: Zinc transporter 10 (404 aa).

Residues 1 to 22 (MESSSSSSYIPFIRQIAASVSA) form the signal peptide. Over 23–49 (ASCDAVVGGGGDKDEECRDEAAALRLK) the chain is Extracellular. The helical transmembrane segment at 50-70 (MVAVAAILIAGAAGVAIPLVG) threads the bilayer. Residues 71–86 (RRRRGGGGGGGGGASS) lie on the Cytoplasmic side of the membrane. A helical transmembrane segment spans residues 87–107 (GGLFVLAKAFAAGVILATGFV). At 108–129 (HMLHDAEHALSNPCLPHSPWRR) the chain is on the extracellular side. The helical transmembrane segment at 130 to 150 (FPFPGFVAMLAALATLVVDFV) threads the bilayer. Over 151 to 248 (GTHFYERKHR…GHEEGPSARH (98 aa)) the chain is Cytoplasmic. Residues 249-269 (VVVSQILELGIVSHSVIIGLS) form a helical membrane-spanning segment. Over 270–280 (LGVSQSPCTIK) the chain is Extracellular. The chain crosses the membrane as a helical span at residues 281 to 301 (PLVAALSFHQFFEGFALGGCI). Residues 302 to 311 (SEAQLKNFSA) are Cytoplasmic-facing. A helical membrane pass occupies residues 312 to 332 (FLMAFFFAITTPAGITVGAAV). Residues 333-343 (ASFYNPNSPRA) lie on the Extracellular side of the membrane. A helical membrane pass occupies residues 344-364 (LVVEGILDSMSAGILIYMALV). Residues 365–383 (DLIAADFLSRKMSCNPRLQ) are Cytoplasmic-facing. Residues 384-404 (VGSYIALFLGAMAMAALALWA) form a helical membrane-spanning segment.

It belongs to the ZIP transporter (TC 2.A.5) family.

The protein localises to the cell membrane. Its function is as follows. Zinc transporter that may be involved in zinc uptake from the rhizosphere. This Oryza sativa subsp. japonica (Rice) protein is Zinc transporter 10 (ZIP10).